Reading from the N-terminus, the 92-residue chain is DNA-binding protein HU 1 (92 aa).

At T4 the chain carries Phosphothreonine.

It belongs to the bacterial histone-like protein family. Homodimer. As to quaternary structure, (Microbial infection) Interacts with Bacillus phage SP01 Gp46; the interaction replaces dsDNA from the hbs-DNA complex.

It is found in the cytoplasm. It localises to the nucleoid. In terms of biological role, histone-like DNA-binding protein which introduces negative supercoils in relaxed plasmid DNA in the presence of topoisomerase I. There are at least 20,000 monomers/cell. Capable of wrapping DNA to stabilize it, and thus to prevent its denaturation under extreme environmental conditions. Binds evenly across chromosome, does not display a preference for AT content. Binds ss- and dsDNA in a sequence non-specific manner; 8 nucleotides are sufficient to bind protein. The chain is DNA-binding protein HU 1 from Bacillus subtilis (strain 168).